Reading from the N-terminus, the 100-residue chain is Large ribosomal subunit protein uL23 (100 aa).

It belongs to the universal ribosomal protein uL23 family. In terms of assembly, part of the 50S ribosomal subunit. Contacts protein L29, and trigger factor when it is bound to the ribosome.

Functionally, one of the early assembly proteins it binds 23S rRNA. One of the proteins that surrounds the polypeptide exit tunnel on the outside of the ribosome. Forms the main docking site for trigger factor binding to the ribosome. In Photobacterium profundum (strain SS9), this protein is Large ribosomal subunit protein uL23.